Reading from the N-terminus, the 517-residue chain is Crotonobetaine/carnitine--CoA ligase (517 aa).

It belongs to the ATP-dependent AMP-binding enzyme family.

The catalysed reaction is 4-(trimethylamino)butanoate + ATP + CoA = 4-(trimethylamino)butanoyl-CoA + AMP + diphosphate. The enzyme catalyses crotonobetaine + ATP + CoA = crotonobetainyl-CoA + AMP + diphosphate. It catalyses the reaction (R)-carnitine + ATP + CoA = (R)-carnitinyl-CoA + AMP + diphosphate. It participates in amine and polyamine metabolism; carnitine metabolism. Its function is as follows. Catalyzes the transfer of CoA to carnitine, generating the initial carnitinyl-CoA needed for the CaiB reaction cycle. Also has activity toward crotonobetaine and gamma-butyrobetaine. The protein is Crotonobetaine/carnitine--CoA ligase of Escherichia coli O1:K1 / APEC.